The following is a 298-amino-acid chain: GTPase Era (298 aa).

In terms of domain architecture, Era-type G spans 4–171 (KSGFVSIVGR…VEGIFELLPE (168 aa)). The interval 12–19 (GRPNVGKS) is G1. 12–19 (GRPNVGKS) serves as a coordination point for GTP. The G2 stretch occupies residues 38-42 (QTTRN). The segment at 59 to 62 (DTPG) is G3. GTP contacts are provided by residues 59–63 (DTPGV) and 121–124 (NKID). Positions 121 to 124 (NKID) are G4. The interval 150–152 (ISA) is G5. In terms of domain architecture, KH type-2 spans 202–280 (TREEIPHSVA…YLDLWVKVKE (79 aa)).

Belongs to the TRAFAC class TrmE-Era-EngA-EngB-Septin-like GTPase superfamily. Era GTPase family. In terms of assembly, monomer.

The protein resides in the cytoplasm. Its subcellular location is the cell membrane. In terms of biological role, an essential GTPase that binds both GDP and GTP, with rapid nucleotide exchange. Plays a role in 16S rRNA processing and 30S ribosomal subunit biogenesis and possibly also in cell cycle regulation and energy metabolism. In Carboxydothermus hydrogenoformans (strain ATCC BAA-161 / DSM 6008 / Z-2901), this protein is GTPase Era.